The sequence spans 424 residues: Homeobox even-skipped homolog protein 2 (424 aa).

2 disordered regions span residues 18–65 and 132–178; these read PAGK…DTPT and TTQL…GPDQ. Composition is skewed to polar residues over residues 50-65 and 132-145; these read RPTS…DTPT and TTQL…VYSD. Residues 146–175 show a composition bias toward low complexity; that stretch reads NGSSTNTSSNGSNITNLNGNSSSIGNSGSG. A DNA-binding region (homeobox) is located at residues 179–238; it reads VRRYRTAFTREQIGRLEKEFYRENYVSRPRRCELAAALNLPETTIKVWFQNRRMKDKRQR.

It belongs to the even-skipped homeobox family.

It localises to the nucleus. The polypeptide is Homeobox even-skipped homolog protein 2 (EVX2) (Heterodontus francisci (Horn shark)).